Reading from the N-terminus, the 20-residue chain is Peroxidase 1 (20 aa).

His14 serves as a coordination point for heme. Position 15 (Thr15) interacts with Ca(2+).

It belongs to the peroxidase family. Classical plant (class III) peroxidase subfamily. Ca(2+) is required as a cofactor. It depends on heme b as a cofactor.

Its subcellular location is the secreted. It carries out the reaction 2 a phenolic donor + H2O2 = 2 a phenolic radical donor + 2 H2O. In terms of biological role, removal of H(2)O(2), oxidation of toxic reductants, biosynthesis and degradation of lignin, suberization, auxin catabolism, response to environmental stresses such as wounding, pathogen attack and oxidative stress. These functions might be dependent on each isozyme/isoform in each plant tissue. In Betula pendula (European white birch), this protein is Peroxidase 1.